A 359-amino-acid chain; its full sequence is Methyltransferase eqxD (359 aa).

Residues 198-199, Asp224, 248-249, Arg264, and Arg265 each bind S-adenosyl-L-methionine; these read GG and SF.

The protein belongs to the class I-like SAM-binding methyltransferase superfamily. Cation-independent O-methyltransferase family.

The enzyme catalyses trichosetin + S-adenosyl-L-methionine = equisetin + S-adenosyl-L-homocysteine + H(+). It participates in mycotoxin biosynthesis. Functionally, methyltransferase; part of the gene cluster that mediates the biosynthesis of equisetin, a trans-fused decalin-containing tetramic acid with antimicrobial activity. The PKS module of eqxS together with the enoylreductase eqxC catalyze the formation of the polyketide unit which is then conjugated to L-serine by the condensation domain of the eqxS NRPS module. Activity of the Dieckmann cyclase domain (RED) results in release of the Dieckmann product intermediate. Diels-Alderase eqx3 is involved in endo-selective Diels-Alder cycloaddition to form the decalin ring, leading to the production of N-desmethylequisetin also called trichosetin. Subsequent N-methylation is carried out by eqxD to give equisetin. The polypeptide is Methyltransferase eqxD (Fusarium heterosporum).